The following is a 583-amino-acid chain: Vivapain-1 (583 aa).

The Cytoplasmic segment spans residues 1–34 (MAQDIKIMNLTKSSLEALNRNQMLSKKSSRKILK). Residues 1 to 338 (MAQDIKIMNL…SSSGANLLAD (338 aa)) constitute a propeptide, activation peptide. The helical; Signal-anchor for type II membrane protein transmembrane segment at 35–55 (ICMYAILTFAMCGVVLICLTA) threads the bilayer. At 56 to 583 (MSNSDGSLTQ…IGVEVFYPIL (528 aa)) the chain is on the lumenal side. Over residues 62–82 (SLTQSGSHNQSGSLKGLSSTP) the composition is skewed to polar residues. Disordered regions lie at residues 62–83 (SLTQ…STPG) and 104–125 (PHGN…ALPN). An N-linked (GlcNAc...) asparagine glycan is attached at N70. Residues 106 to 119 (GNRDPTGDDVEKPA) show a composition bias toward basic and acidic residues. N195 and N272 each carry an N-linked (GlcNAc...) asparagine glycan. 3 disulfide bridges follow: C360/C402, C395/C435, and C420/C440. Residue C363 is part of the active site. N381 carries an N-linked (GlcNAc...) asparagine glycan. Residues N486 and N494 are each glycosylated (N-linked (GlcNAc...) asparagine). C489 and C572 are disulfide-bonded. Residues H495 and N547 contribute to the active site.

It belongs to the peptidase C1 family.

It localises to the membrane. In terms of biological role, cysteine protease. The sequence is that of Vivapain-1 from Plasmodium vivax (strain Salvador I).